Reading from the N-terminus, the 121-residue chain is MSAVAENIQTEMPAPFVFTDSAASKVAELIAEEGNPDLKLRVFVQGGGCSGFQYGFTFDEITNEDDTTMTKNGVSLLIDAMSYQYLVGAEIDYKDDLEGAQFVIKNPNASSSCGCGSSFSV.

Iron-sulfur cluster is bound by residues cysteine 49, cysteine 113, and cysteine 115.

It belongs to the HesB/IscA family. In terms of assembly, homodimer. Requires iron-sulfur cluster as cofactor.

Functionally, required for insertion of 4Fe-4S clusters. The polypeptide is Putative iron-sulfur cluster insertion protein ErpA 1 (Polaromonas naphthalenivorans (strain CJ2)).